A 60-amino-acid polypeptide reads, in one-letter code: UPF0434 protein Dtpsy_1553 (60 aa).

It belongs to the UPF0434 family.

This Acidovorax ebreus (strain TPSY) (Diaphorobacter sp. (strain TPSY)) protein is UPF0434 protein Dtpsy_1553.